We begin with the raw amino-acid sequence, 253 residues long: tRNA (guanine-N(1)-)-methyltransferase (253 aa).

Residues Gly-116 and 136–141 (VGDYIL) each bind S-adenosyl-L-methionine.

The protein belongs to the RNA methyltransferase TrmD family. In terms of assembly, homodimer.

It is found in the cytoplasm. It carries out the reaction guanosine(37) in tRNA + S-adenosyl-L-methionine = N(1)-methylguanosine(37) in tRNA + S-adenosyl-L-homocysteine + H(+). Its function is as follows. Specifically methylates guanosine-37 in various tRNAs. The protein is tRNA (guanine-N(1)-)-methyltransferase of Colwellia psychrerythraea (strain 34H / ATCC BAA-681) (Vibrio psychroerythus).